A 619-amino-acid chain; its full sequence is Very-long-chain aldehyde decarbonylase GL1-1 (619 aa).

5 helical membrane passes run 44–64, 93–113, 123–143, 190–210, and 322–342; these read LLLL…WSSF, DNFL…FPSL, GLAV…YAAH, AAAC…VLGF, and PFLL…WAWS. Residues 129-269 enclose the Fatty acid hydroxylase domain; that stretch reads LLHVAATEPL…MPLFDLIGGT (141 aa).

This sequence belongs to the sterol desaturase family. In terms of assembly, homodimer.

The protein localises to the endoplasmic reticulum membrane. It catalyses the reaction a long-chain fatty aldehyde + 2 NADPH + O2 + H(+) = a long-chain alkane + formate + 2 NADP(+) + H2O. Functionally, aldehyde decarbonylase involved in the conversion of aldehydes to alkanes. Core component of a very-long-chain alkane synthesis complex. The polypeptide is Very-long-chain aldehyde decarbonylase GL1-1 (Oryza sativa subsp. indica (Rice)).